The chain runs to 300 residues: Geranylgeranyl pyrophosphate synthase (300 aa).

Met-1 is modified (N-acetylmethionine). Residues Lys-25, Arg-28, and His-57 each coordinate isopentenyl diphosphate. Residues Asp-64 and Asp-68 each contribute to the Mg(2+) site. A dimethylallyl diphosphate-binding site is contributed by Arg-73. Isopentenyl diphosphate is bound at residue Arg-74. Dimethylallyl diphosphate contacts are provided by Lys-151, Thr-152, Gln-185, Lys-202, and Lys-212.

Belongs to the FPP/GGPP synthase family. Homohexamer; trimer of homodimers. Mg(2+) is required as a cofactor.

Its subcellular location is the cytoplasm. The protein localises to the perinuclear region. It is found in the myofibril. It localises to the sarcomere. The protein resides in the z line. It carries out the reaction isopentenyl diphosphate + dimethylallyl diphosphate = (2E)-geranyl diphosphate + diphosphate. The enzyme catalyses isopentenyl diphosphate + (2E)-geranyl diphosphate = (2E,6E)-farnesyl diphosphate + diphosphate. The catalysed reaction is isopentenyl diphosphate + (2E,6E)-farnesyl diphosphate = (2E,6E,10E)-geranylgeranyl diphosphate + diphosphate. The protein operates within isoprenoid biosynthesis; farnesyl diphosphate biosynthesis; farnesyl diphosphate from geranyl diphosphate and isopentenyl diphosphate: step 1/1. Its pathway is isoprenoid biosynthesis; geranyl diphosphate biosynthesis; geranyl diphosphate from dimethylallyl diphosphate and isopentenyl diphosphate: step 1/1. It functions in the pathway isoprenoid biosynthesis; geranylgeranyl diphosphate biosynthesis; geranylgeranyl diphosphate from farnesyl diphosphate and isopentenyl diphosphate: step 1/1. Functionally, catalyzes the trans-addition of the three molecules of IPP onto DMAPP to form geranylgeranyl pyrophosphate, an important precursor of carotenoids and geranylated proteins. This is Geranylgeranyl pyrophosphate synthase (GGPS1) from Bos taurus (Bovine).